Here is a 264-residue protein sequence, read N- to C-terminus: Small ribosomal subunit protein eS1 (264 aa).

This sequence belongs to the eukaryotic ribosomal protein eS1 family. As to quaternary structure, component of the small ribosomal subunit. Mature ribosomes consist of a small (40S) and a large (60S) subunit. The 40S subunit contains about 33 different proteins and 1 molecule of RNA (18S). The 60S subunit contains about 49 different proteins and 3 molecules of RNA (25S, 5.8S and 5S).

The protein resides in the cytoplasm. The protein is Small ribosomal subunit protein eS1 of Babesia bovis.